The primary structure comprises 305 residues: uncharacterized protein (305 aa).

This is an uncharacterized protein from Sinorhizobium fredii (strain NBRC 101917 / NGR234).